The primary structure comprises 1018 residues: Fibronectin-binding protein A (1018 aa).

An N-terminal signal peptide occupies residues 1–36 (MKNNLRYGIRKHKLGAASVFLGTMIVVGMGQDKEAA). The YSIRK-G/S signaling motif motif lies at 7-18 (YGIRKHKLGAAS). The ligand-binding A region stretch occupies residues 37 to 511 (ASEQKTTTVE…SNKANGNGKN (475 aa)). Disordered regions lie at residues 38–61 (SEQK…SETQ) and 78–195 (ATVT…ETGT). Polar residues-rich tracts occupy residues 39 to 61 (EQKT…SETQ) and 78 to 92 (ATVT…QVTT). A compositionally biased stretch (basic and acidic residues) spans 112–126 (TVKEEVVKEEAKPQV). Polar residues predominate over residues 129–139 (TTQSQDNSGDQ). The tract at residues 194–511 (GTDVTSKVTV…SNKANGNGKN (318 aa)) is fibrinogen/elastin/tropoelastin-binding. Residues 512–872 (GPIIQNNKFE…EGQQTIEEDT (361 aa)) are fibronectin-binding. The stretch at 545–574 (EEYDSSTLDIDYHTAIDGGGGYVDGYIETI) is one B-1 repeat. The tract at residues 545-604 (EEYDSSTLDIDYHTAIDGGGGYVDGYIETIEETDSSAIDIDYHTAVDSEAGHVGGYTESS) is 2 X approximate tandem repeats. The stretch at 575–604 (EETDSSAIDIDYHTAVDSEAGHVGGYTESS) is one B-2 repeat. Disordered regions lie at residues 595 to 622 (GHVG…NSKH), 740 to 813 (LGYE…DIDF), and 827 to 997 (EIIE…GMLF). A D-1 repeat occupies 745-782 (GQNSGNQSFEEDTEEDKPKYEQGGNIVDIDFDSVPQIH). The segment at 745-878 (GQNSGNQSFE…EEDTTPPIVP (134 aa)) is 4 X approximate tandem repeats. Residues 783–820 (GQNKGNQSFEEDTEKDKPKYEHGGNIIDIDFDSVPHIH) form a D-2 repeat. One copy of the D-3 repeat lies at 821–859 (GFNKHTEIIEEDTNKDKPSYQFGGHNSVDFEEDTLPKVS). Positions 827–838 (EIIEEDTNKDKP) are enriched in basic and acidic residues. The D-4; truncated repeat unit spans residues 860–878 (GQNEGQQTIEEDTTPPIVP). Residues 875–938 (PIVPPTPPTP…PAEPGKPVPP (64 aa)) show a composition bias toward pro residues. WR repeat units follow at residues 879 to 892 (PTPP…EPET), 893 to 906 (PTPP…EPET), 907 to 920 (PTPP…EPET), 921 to 934 (PTPP…EPGK), and 935 to 948 (PVPP…KPSK). The tract at residues 879–948 (PTPPTPEVPS…AKEEPKKPSK (70 aa)) is 5 X tandem repeats, Pro-rich (WR). An LPXTG sorting signal motif is present at residues 982-986 (LPETG). Pentaglycyl murein peptidoglycan amidated threonine is present on threonine 985. Residues 986–1018 (GGEESTNKGMLFGGLFSILGLALLRRNKKNHKA) constitute a propeptide, removed by sortase.

The protein localises to the secreted. Its subcellular location is the cell wall. Its function is as follows. Promotes bacterial attachment to multiple substrates, such as fibronectin (Fn), fibrinogen (Fg), elastin peptides and tropoelastin. This confers to S.aureus the ability to invade endothelial cells. Promotes adherence to and aggregation of activated platelets. In Staphylococcus aureus (strain USA300), this protein is Fibronectin-binding protein A.